A 94-amino-acid chain; its full sequence is Cell division protein FtsB (94 aa).

Residues 1-3 (MRT) are Cytoplasmic-facing. A helical transmembrane segment spans residues 4–21 (FAIFLLIALGWLQYTLWF). Over 22 to 94 (GKNGMSDYAQ…YRIIDENSEG (73 aa)) the chain is Periplasmic. A coiled-coil region spans residues 33 to 71 (SNDVALQEEVNQGLRNRNEQMFAEIDDLKKGSEAIEERA).

It belongs to the FtsB family. As to quaternary structure, part of a complex composed of FtsB, FtsL and FtsQ.

The protein resides in the cell inner membrane. Its function is as follows. Essential cell division protein. May link together the upstream cell division proteins, which are predominantly cytoplasmic, with the downstream cell division proteins, which are predominantly periplasmic. In Aliivibrio fischeri (strain ATCC 700601 / ES114) (Vibrio fischeri), this protein is Cell division protein FtsB.